The sequence spans 474 residues: Microtubule protein alp7 (474 aa).

The segment covering 1-20 (MSDIVSSSTDYSRRSPSSSS) has biased composition (low complexity). Disordered stretches follow at residues 1 to 79 (MSDI…DTLN), 93 to 114 (KSFD…LSQH), and 164 to 223 (SLQT…NSTQ). Ser-17 is modified (phosphoserine). Positions 25–36 (ETDHTGFHEKRQ) are enriched in basic and acidic residues. Residues 66-76 (SKPNPQLNLKD) show a composition bias toward polar residues. 2 stretches are compositionally biased toward polar residues: residues 177–189 (SNGS…NTAP) and 201–223 (RNSA…NSTQ). Coiled coils occupy residues 219–273 (INST…QLRS) and 367–471 (KISN…LNLE).

Interacts with alp14.

It localises to the nucleus. Its subcellular location is the cytoplasm. The protein resides in the cytoskeleton. The protein localises to the spindle. It is found in the chromosome. It localises to the centromere. Its subcellular location is the kinetochore. Required for bipolar spindle formation and proper chromosome segregation. Has an indirect role in connecting the kinetochores and the plus end of pole to chromosome microtubules by targeting alp14 to the spindle pole body. Involved in the emergence of large microtubule organizing centers (MTOC) in interphase cells. Attaches to the minus ends of microtubules and associates with the sites of microtubule attachment on the nuclear envelope. This leads to the stabilization of the microtubule bundles. In Schizosaccharomyces pombe (strain 972 / ATCC 24843) (Fission yeast), this protein is Microtubule protein alp7 (alp7).